The sequence spans 110 residues: Large ribosomal subunit protein uL24 (110 aa).

The protein belongs to the universal ribosomal protein uL24 family. As to quaternary structure, part of the 50S ribosomal subunit.

Its function is as follows. One of two assembly initiator proteins, it binds directly to the 5'-end of the 23S rRNA, where it nucleates assembly of the 50S subunit. Functionally, one of the proteins that surrounds the polypeptide exit tunnel on the outside of the subunit. This is Large ribosomal subunit protein uL24 from Caldicellulosiruptor saccharolyticus (strain ATCC 43494 / DSM 8903 / Tp8T 6331).